Here is a 273-residue protein sequence, read N- to C-terminus: Putative pyruvate, phosphate dikinase regulatory protein (273 aa).

Residue Gly149–Thr156 participates in ADP binding.

It belongs to the pyruvate, phosphate/water dikinase regulatory protein family. PDRP subfamily.

The catalysed reaction is N(tele)-phospho-L-histidyl/L-threonyl-[pyruvate, phosphate dikinase] + ADP = N(tele)-phospho-L-histidyl/O-phospho-L-threonyl-[pyruvate, phosphate dikinase] + AMP + H(+). It catalyses the reaction N(tele)-phospho-L-histidyl/O-phospho-L-threonyl-[pyruvate, phosphate dikinase] + phosphate + H(+) = N(tele)-phospho-L-histidyl/L-threonyl-[pyruvate, phosphate dikinase] + diphosphate. In terms of biological role, bifunctional serine/threonine kinase and phosphorylase involved in the regulation of the pyruvate, phosphate dikinase (PPDK) by catalyzing its phosphorylation/dephosphorylation. In Rickettsia rickettsii (strain Iowa), this protein is Putative pyruvate, phosphate dikinase regulatory protein.